The chain runs to 315 residues: 4-carboxy-2-hydroxymuconate-6-semialdehyde dehydrogenase (315 aa).

It belongs to the Gfo/Idh/MocA family. Homodimer.

The enzyme catalyses 4-carboxy-2-hydroxymuconate semialdehyde hemiacetal + NADP(+) = 2-oxo-2H-pyran-4,6-dicarboxylate + NADPH + H(+). Its pathway is secondary metabolite metabolism; lignin degradation. Its activity is regulated as follows. Inhibited by p-chloromercuribenzoate (10 mM), HgCl2 (10 mM), or 5,5-dithiobis(2-nitrobenzoate) (100 mM). In terms of biological role, involved in the degradation of protocatechuate (PCA) via the PCA 4,5-cleavage pathway. Catalyzes the oxidation of the hemiacetal form of 4-carboxy-2-hydroxymuconate-6-semialdehyde (CHMS) to produce 2-pyrone-4,6-dicarboxylate (PDC). LigC has 10-times-higher affinity to NADP than to NAD. This is 4-carboxy-2-hydroxymuconate-6-semialdehyde dehydrogenase (ligC) from Sphingobium sp. (strain NBRC 103272 / SYK-6).